The following is a 407-amino-acid chain: tRNA(Ile2) 2-agmatinylcytidine synthetase TiaS (407 aa).

It belongs to the TiaS family.

Its subcellular location is the cytoplasm. The catalysed reaction is cytidine(34) in tRNA(Ile2) + agmatine + ATP + H2O = 2-agmatinylcytidine(34) in tRNA(Ile2) + AMP + 2 phosphate + 2 H(+). In terms of biological role, ATP-dependent agmatine transferase that catalyzes the formation of 2-agmatinylcytidine (agm2C) at the wobble position (C34) of tRNA(Ile2), converting the codon specificity from AUG to AUA. The polypeptide is tRNA(Ile2) 2-agmatinylcytidine synthetase TiaS (Caldivirga maquilingensis (strain ATCC 700844 / DSM 13496 / JCM 10307 / IC-167)).